We begin with the raw amino-acid sequence, 383 residues long: Galactokinase (383 aa).

Position 34 to 37 (34 to 37) interacts with substrate; sequence EHTD. Position 124-130 (124-130) interacts with ATP; the sequence is GAGLSSS. Residues S130 and E162 each contribute to the Mg(2+) site. The active-site Proton acceptor is D174. Y223 serves as a coordination point for substrate.

Belongs to the GHMP kinase family. GalK subfamily.

The protein localises to the cytoplasm. It carries out the reaction alpha-D-galactose + ATP = alpha-D-galactose 1-phosphate + ADP + H(+). The protein operates within carbohydrate metabolism; galactose metabolism. Its function is as follows. Catalyzes the transfer of the gamma-phosphate of ATP to D-galactose to form alpha-D-galactose-1-phosphate (Gal-1-P). This chain is Galactokinase, found in Serratia proteamaculans (strain 568).